The primary structure comprises 445 residues: Phosphoglucosamine mutase (445 aa).

The active-site Phosphoserine intermediate is serine 102. 4 residues coordinate Mg(2+): serine 102, aspartate 240, aspartate 242, and aspartate 244. Serine 102 carries the phosphoserine modification.

The protein belongs to the phosphohexose mutase family. Mg(2+) serves as cofactor. Activated by phosphorylation.

The catalysed reaction is alpha-D-glucosamine 1-phosphate = D-glucosamine 6-phosphate. Functionally, catalyzes the conversion of glucosamine-6-phosphate to glucosamine-1-phosphate. This chain is Phosphoglucosamine mutase, found in Mycobacterium sp. (strain JLS).